We begin with the raw amino-acid sequence, 366 residues long: Histidinol-phosphate aminotransferase (366 aa).

Residue K228 is modified to N6-(pyridoxal phosphate)lysine.

It belongs to the class-II pyridoxal-phosphate-dependent aminotransferase family. Histidinol-phosphate aminotransferase subfamily. As to quaternary structure, homodimer. It depends on pyridoxal 5'-phosphate as a cofactor.

The enzyme catalyses L-histidinol phosphate + 2-oxoglutarate = 3-(imidazol-4-yl)-2-oxopropyl phosphate + L-glutamate. Its pathway is amino-acid biosynthesis; L-histidine biosynthesis; L-histidine from 5-phospho-alpha-D-ribose 1-diphosphate: step 7/9. This is Histidinol-phosphate aminotransferase from Stutzerimonas stutzeri (Pseudomonas stutzeri).